The following is a 776-amino-acid chain: MDSKESLTSPSEEIPSSVHGQERGNVMDFYKTRRGGATVKVFMPSPSLGGSSQSDSKQQRLLVDFPKGSVSNVQQPDLSKAVSLSMGLYMGETETKVMGNDLGFPQQGQITLSSGETNLQLLEESIANLNRSTSVPEHPKISASVAVSAALLKKELPETPSDVSSEQQNLKGQTGTNGGNVKLCTADQSTFDILQDLEFSSASPGRETNESPWRSDLLLDENCLLSPLAVEDDPFLSEGNLKEDCKPLILPDTKPKIKDNGDLILSSPKNVPLPQVKTEKEDFIELCTPGVIKQEKLGPVYCQANFSGANIIGNKMSAISVHGVSTSGGQMYHYDMNTATLSQQQDQKPIFNVIPPIPVSSENWNRCQGSGDENLTSLGTLNFSGRSVFSNGYSSPGMRPDVSSPPSNSLSAVGPPPKFCLVCSDEASGCHYGVLTCGSCKVFFKRAVEGQHNYLCAGRNDCIIDKIRRKNCPACRYRKCLQAGMNLEARKTKKKIKGIQQTTTGISQETPENSANKTIVPATLPQLTPTPVSLLEVIEPEVLYAGYDSSLPDTTWRIMSALNMLGGRQVIAAVKWAKAIPGFRNLHLDDQMTLLQYSWMFLMAFALGWRSYKQASANLLCFAPDLIINEQRMSLPFMYDQCKHMLFVSSELQRLQVSYEEYLCMKTLLLLSSVPKEGLKSQELFDEIRMTYIKELGKAIVKREGNSSQNWQRFYQLTKLLDSMHDVVENLLNYCFQTFLDKTMRIEFPEMLAEIITNQIPKYSSGNIKKLLFHQK.

Residues 1–11 (MDSKESLTSPS) are compositionally biased toward polar residues. Residues 1-25 (MDSKESLTSPSEEIPSSVHGQERGN) form a disordered region. Positions 1 to 419 (MDSKESLTSP…LSAVGPPPKF (419 aa)) are modulating. At threonine 8 the chain carries Phosphothreonine. Residue arginine 23 is modified to Omega-N-methylarginine. 3 positions are modified to phosphoserine: serine 45, serine 113, and serine 134. The disordered stretch occupies residues 157-178 (PETPSDVSSEQQNLKGQTGTNG). Residues 161–174 (SDVSSEQQNLKGQT) are compositionally biased toward polar residues. Phosphoserine occurs at positions 203, 211, and 226. Residue lysine 258 forms a Glycyl lysine isopeptide (Lys-Gly) (interchain with G-Cter in SUMO2) linkage. Position 267 is a phosphoserine (serine 267). Residues lysine 277 and lysine 293 each participate in a glycyl lysine isopeptide (Lys-Gly) (interchain with G-Cter in SUMO); alternate cross-link. Residues lysine 277 and lysine 293 each participate in a glycyl lysine isopeptide (Lys-Gly) (interchain with G-Cter in SUMO2); alternate cross-link. A phosphoserine mark is found at serine 307 and serine 404. The segment at residues 417–492 (PKFCLVCSDE…AGMNLEARKT (76 aa)) is a DNA-binding region (nuclear receptor). A Glycyl lysine isopeptide (Lys-Gly) (interchain with G-Cter in ubiquitin) cross-link involves residue lysine 418. NR C4-type zinc fingers lie at residues 420–440 (CLVC…CGSC) and 456–480 (CAGR…YRKC). An N6-acetyllysine mark is found at lysine 479, lysine 491, lysine 493, and lysine 494. Positions 484–776 (GMNLEARKTK…NIKKLLFHQK (293 aa)) are interaction with CLOCK. The tract at residues 486 to 522 (NLEARKTKKKIKGIQQTTTGISQETPENSANKTIVPA) is hinge. One can recognise an NR LBD domain in the interval 523–757 (TLPQLTPTPV…FPEMLAEIIT (235 aa)). The interaction with CRY1 stretch occupies residues 531 to 696 (PVSLLEVIEP…EIRMTYIKEL (166 aa)). A Glycyl lysine isopeptide (Lys-Gly) (interchain with G-Cter in SUMO) cross-link involves residue lysine 702.

Belongs to the nuclear hormone receptor family. NR3 subfamily. Heteromultimeric cytoplasmic complex with HSP90AA1, HSPA1A/HSPA1B, and FKBP5 or another immunophilin such as PPID, STIP1, or the immunophilin homolog PPP5C. Upon ligand binding FKBP5 dissociates from the complex and FKBP4 takes its place, thereby linking the complex to dynein and mediating transport to the nucleus, where the complex dissociates. Probably forms a complex composed of chaperones HSP90 and HSP70, co-chaperones CDC37, PPP5C, TSC1 and client protein TSC2, CDK4, AKT, RAF1 and NR3C1; this complex does not contain co-chaperones STIP1/HOP and PTGES3/p23. Directly interacts with UNC45A. Binds to DNA as a homodimer, and as heterodimer with NR3C2 or the retinoid X receptor. Binds STAT5A and STAT5B homodimers and heterodimers. Interacts with NRIP1, POU2F1, POU2F2 and TRIM28. Interacts with several coactivator complexes, including the SMARCA4 complex, CREBBP/EP300, TADA2L (Ada complex) and p160 coactivators such as NCOA2 and NCOA6. Interaction with BAG1 inhibits transactivation. Interacts with HEXIM1 and TGFB1I1. Interacts with NCOA1. Interacts with NCOA3, SMARCA4, SMARCC1, SMARCD1, and SMARCE1. Interacts with CLOCK, CRY1 and CRY2 in a ligand-dependent fashion. Interacts with CIART. Interacts with RWDD3. Interacts with UBE2I/UBC9 and this interaction is enhanced in the presence of RWDD3. Interacts with GRIP1. Interacts with NR4A3 (via nuclear receptor DNA-binding domain), represses transcription activity of NR4A3 on the POMC promoter Nur response element (NurRE). Directly interacts with PNRC2 to attract and form a complex with UPF1 and DCP1A; the interaction leads to rapid mRNA degradation. Interacts with GSK3B. Interacts with FNIP1 and FNIP2. Interacts (via C-terminus) with NR3C1 (via C-terminus). Interacts with MCM3AP. Interacts (via domain NR LBD) with HSP90AA1 and HSP90AB1. In the absence of hormonal ligand, interacts with TACC1. Acetylation by CLOCK reduces its binding to glucocorticoid response elements and its transcriptional activity. Post-translationally, increased proteasome-mediated degradation in response to glucocorticoids. In terms of processing, phosphorylated in the absence of hormone; becomes hyperphosphorylated in the presence of glucocorticoid. The Ser-203, Ser-226 and Ser-404-phosphorylated forms are mainly cytoplasmic, and the Ser-211-phosphorylated form is nuclear. Phosphorylation at Ser-211 increases transcriptional activity. Phosphorylation at Ser-203, Ser-226 and Ser-404 decreases signaling capacity. Phosphorylation at Ser-404 may protect from glucocorticoid-induced apoptosis. Phosphorylation at Ser-203 and Ser-211 is not required in regulation of chromosome segregation. May be dephosphorylated by PPP5C, attenuates NR3C1 action. Sumoylation at Lys-277 and Lys-293 negatively regulates its transcriptional activity. Sumoylation at Lys-702 positively regulates its transcriptional activity in the presence of RWDD3. Sumoylation at Lys-277 and Lys-293 is dispensable whereas sumoylation at Lys-702 is critical for the stimulatory effect of RWDD3 on its transcriptional activity. Heat shock increases sumoylation in a RWDD3-dependent manner. Post-translationally, ubiquitinated by UBR5, leading to its degradation: UBR5 specifically recognizes and binds ligand-bound NR3C1 when it is not associated with coactivators (NCOAs). In presence of NCOAs, the UBR5-degron is not accessible, preventing its ubiquitination and degradation.

The protein localises to the cytoplasm. The protein resides in the nucleus. It is found in the mitochondrion. It localises to the cytoskeleton. Its subcellular location is the spindle. The protein localises to the microtubule organizing center. The protein resides in the centrosome. It is found in the chromosome. It localises to the nucleoplasm. Its function is as follows. Receptor for glucocorticoids (GC). Has a dual mode of action: as a transcription factor that binds to glucocorticoid response elements (GRE), both for nuclear and mitochondrial DNA, and as a modulator of other transcription factors. Affects inflammatory responses, cellular proliferation and differentiation in target tissues. Involved in chromatin remodeling. Plays a role in rapid mRNA degradation by binding to the 5' UTR of target mRNAs and interacting with PNRC2 in a ligand-dependent manner which recruits the RNA helicase UPF1 and the mRNA-decapping enzyme DCP1A, leading to RNA decay. Could act as a coactivator for STAT5-dependent transcription upon growth hormone (GH) stimulation and could reveal an essential role of hepatic GR in the control of body growth. Mediates glucocorticoid-induced apoptosis. Promotes accurate chromosome segregation during mitosis. May act as a tumor suppressor. May play a negative role in adipogenesis through the regulation of lipolytic and antilipogenic gene expression. The sequence is that of Glucocorticoid receptor (NR3C1) from Tupaia belangeri (Common tree shrew).